We begin with the raw amino-acid sequence, 132 residues long: Phosphoribosyl-AMP cyclohydrolase (132 aa).

Aspartate 86 serves as a coordination point for Mg(2+). Cysteine 87 contributes to the Zn(2+) binding site. Mg(2+) contacts are provided by aspartate 88 and aspartate 90. Positions 103 and 110 each coordinate Zn(2+).

Belongs to the PRA-CH family. In terms of assembly, homodimer. It depends on Mg(2+) as a cofactor. Zn(2+) is required as a cofactor.

It is found in the cytoplasm. It catalyses the reaction 1-(5-phospho-beta-D-ribosyl)-5'-AMP + H2O = 1-(5-phospho-beta-D-ribosyl)-5-[(5-phospho-beta-D-ribosylamino)methylideneamino]imidazole-4-carboxamide. It participates in amino-acid biosynthesis; L-histidine biosynthesis; L-histidine from 5-phospho-alpha-D-ribose 1-diphosphate: step 3/9. In terms of biological role, catalyzes the hydrolysis of the adenine ring of phosphoribosyl-AMP. The chain is Phosphoribosyl-AMP cyclohydrolase from Haloquadratum walsbyi (strain DSM 16790 / HBSQ001).